We begin with the raw amino-acid sequence, 394 residues long: MNDSPGRTTVSGPSGGSDPFRVMVVDDSAVIRGLITRALESDPEIKVVASVANGQMAINTLSRQPIDVIVLDIEMPVLDGLSALPHLLQADPNVKIVMASTLTAKGADISLRALRAGAADYIPKPSSTRELTGADTFKRELTEKVKALGAAARRSGPRREGTAAARPPGAAAQPTSGYTLPSPVRAKPETGPLTVRPLPPDGRPDVIAIGSSTGGPQALFEVLGHLRGATQPILITQHMPATFTTILADHITRQCGIQCAEAKDGEPIVGGRAYVAPGDFHFLVVNRNGVPTVQLTKDAPENFCRPAVDPMLRSIVRQWGRRVLSVILTGMGHDGQKGCESVVQAGGVVIGQDEATSVVWGMPGAVATAGLCSAILPLKEIGPFIQKIAARRAA.

Residues 21–139 (RVMVVDDSAV…ELTGADTFKR (119 aa)) form the Response regulatory domain. Position 72 is a 4-aspartylphosphate (Asp72). The interval 148–201 (LGAAARRSGPRREGTAAARPPGAAAQPTSGYTLPSPVRAKPETGPLTVRPLPPD) is disordered. Residues 162-172 (TAAARPPGAAA) show a composition bias toward low complexity. Residues 200 to 382 (PDGRPDVIAI…SAILPLKEIG (183 aa)) form the CheB-type methylesterase domain. Residues Ser212, His238, and Asp334 contribute to the active site.

It belongs to the CheB family. Post-translationally, phosphorylated by CheA. Phosphorylation of the N-terminal regulatory domain activates the methylesterase activity.

Its subcellular location is the cytoplasm. It carries out the reaction [protein]-L-glutamate 5-O-methyl ester + H2O = L-glutamyl-[protein] + methanol + H(+). The enzyme catalyses L-glutaminyl-[protein] + H2O = L-glutamyl-[protein] + NH4(+). In terms of biological role, involved in chemotaxis. Part of a chemotaxis signal transduction system that modulates chemotaxis in response to various stimuli. Catalyzes the demethylation of specific methylglutamate residues introduced into the chemoreceptors (methyl-accepting chemotaxis proteins or MCP) by CheR. Also mediates the irreversible deamidation of specific glutamine residues to glutamic acid. The chain is Protein-glutamate methylesterase/protein-glutamine glutaminase of group 2 operon from Rhodospirillum centenum (strain ATCC 51521 / SW).